Reading from the N-terminus, the 512-residue chain is Maturase K (512 aa).

This sequence belongs to the intron maturase 2 family. MatK subfamily.

It localises to the plastid. It is found in the chloroplast. Usually encoded in the trnK tRNA gene intron. Probably assists in splicing its own and other chloroplast group II introns. The protein is Maturase K of Alisma canaliculatum (Water plantain).